The sequence spans 423 residues: CinA-like protein (423 aa).

This sequence belongs to the CinA family.

The sequence is that of CinA-like protein from Chlorobaculum tepidum (strain ATCC 49652 / DSM 12025 / NBRC 103806 / TLS) (Chlorobium tepidum).